Reading from the N-terminus, the 171-residue chain is Iron-sulfur cluster assembly protein 3 (171 aa).

The N-terminal 49 residues, 1–49 (MLRQTTKRAFLGLASQNPTPFPVVSRLYHPNVIDHYDNPRNVGSFDKND), are a transit peptide targeting the mitochondrion.

This sequence belongs to the NifU family. Component of the core Fe-S cluster (ISC) assembly machinery. [2Fe-2S] cluster is required as a cofactor. In terms of tissue distribution, mostly expressed in flowers and pollen, and, to a lower extent, in leaves and roots.

The protein localises to the mitochondrion matrix. It functions in the pathway cofactor biosynthesis; iron-sulfur cluster biosynthesis. Its function is as follows. Scaffold protein for the de novo synthesis of iron-sulfur (Fe-S) clusters within mitochondria, which is required for maturation of both mitochondrial and cytoplasmic [2Fe-2S] and [4Fe-4S] proteins. First, a [2Fe-2S] cluster is transiently assembled on the scaffold protein ISCU (ISU1, ISU2 or ISU3). In a second step, the cluster is released from ISCU, transferred to a glutaredoxin, followed by the formation of mitochondrial [2Fe-2S] proteins, the synthesis of [4Fe-4S] clusters and their target-specific insertion into the recipient apoproteins. Cluster assembly on ISCU depends on the function of the cysteine desulfurase complex NFS1-ISD11, which serves as the sulfur donor for cluster synthesis, the iron-binding protein frataxin as the putative iron donor, and the electron transfer chain comprised of ferredoxin reductase and ferredoxin, which receive their electrons from NADH. The protein is Iron-sulfur cluster assembly protein 3 (ISU3) of Arabidopsis thaliana (Mouse-ear cress).